We begin with the raw amino-acid sequence, 189 residues long: Elongation factor P (189 aa).

K34 carries the post-translational modification N6-(3,6-diaminohexanoyl)-5-hydroxylysine.

It belongs to the elongation factor P family. May be beta-lysylated on the epsilon-amino group of Lys-34 by the combined action of EpmA and EpmB, and then hydroxylated on the C5 position of the same residue by EpmC (if this protein is present). Lysylation is critical for the stimulatory effect of EF-P on peptide-bond formation. The lysylation moiety may extend toward the peptidyltransferase center and stabilize the terminal 3-CCA end of the tRNA. Hydroxylation of the C5 position on Lys-34 may allow additional potential stabilizing hydrogen-bond interactions with the P-tRNA.

It localises to the cytoplasm. The protein operates within protein biosynthesis; polypeptide chain elongation. Functionally, involved in peptide bond synthesis. Alleviates ribosome stalling that occurs when 3 or more consecutive Pro residues or the sequence PPG is present in a protein, possibly by augmenting the peptidyl transferase activity of the ribosome. Modification of Lys-34 is required for alleviation. In Francisella philomiragia subsp. philomiragia (strain ATCC 25017 / CCUG 19701 / FSC 153 / O#319-036), this protein is Elongation factor P.